Here is a 204-residue protein sequence, read N- to C-terminus: Large ribosomal subunit protein bL25 (204 aa).

The protein belongs to the bacterial ribosomal protein bL25 family. CTC subfamily. In terms of assembly, part of the 50S ribosomal subunit; part of the 5S rRNA/L5/L18/L25 subcomplex. Contacts the 5S rRNA. Binds to the 5S rRNA independently of L5 and L18.

Its function is as follows. This is one of the proteins that binds to the 5S RNA in the ribosome where it forms part of the central protuberance. The sequence is that of Large ribosomal subunit protein bL25 from Bordetella bronchiseptica (strain ATCC BAA-588 / NCTC 13252 / RB50) (Alcaligenes bronchisepticus).